We begin with the raw amino-acid sequence, 61 residues long: Large ribosomal subunit protein bL28 (61 aa).

A disordered region spans residues 1-24 (MAKDYVTGKKTTFGNKRSHSLNPT). The span at 9-23 (KKTTFGNKRSHSLNP) shows a compositional bias: polar residues.

The protein belongs to the bacterial ribosomal protein bL28 family.

The protein is Large ribosomal subunit protein bL28 of Lactobacillus acidophilus (strain ATCC 700396 / NCK56 / N2 / NCFM).